Consider the following 309-residue polypeptide: General transcription factor IIH subunit 3 (309 aa).

The C4-type zinc finger occupies 269 to 286; it reads CSVCLSIFCNFSPICTTC.

The protein belongs to the TFB4 family. As to quaternary structure, part of a TFIID-containing RNA polymerase II pre-initiation complex that is composed of TBP and at least GTF2A1, GTF2A2, GTF2E1, GTF2E2, GTF2F1, GTF2H2, GTF2H3, GTF2H4, GTF2H5, GTF2B, TCEA1, ERCC2, ERCC3, TAF1, TAF2, TAF3, TAF4, TAF5, TAF6, TAF7, TAF8, TAF9, TAF10, TAF11, TAF12 and TAF13. Component of the 7-subunit TFIIH core complex composed of XPB/ERCC3, XPD/ERCC2, GTF2H1, GTF2H2, GTF2H3, GTF2H4 and GTF2H5, which is active in NER. The core complex associates with the 3-subunit CDK-activating kinase (CAK) module composed of CCNH/cyclin H, CDK7 and MNAT1 to form the 10-subunit holoenzyme (holo-TFIIH) active in transcription. Interacts with RARA; the interaction requires prior phosphorylation of RARA on 'Ser-369' which then enhances interaction of RARA with CDK7.

It is found in the nucleus. Functionally, component of the general transcription and DNA repair factor IIH (TFIIH) core complex, which is involved in general and transcription-coupled nucleotide excision repair (NER) of damaged DNA and, when complexed to CAK, in RNA transcription by RNA polymerase II. In NER, TFIIH acts by opening DNA around the lesion to allow the excision of the damaged oligonucleotide and its replacement by a new DNA fragment. In transcription, TFIIH has an essential role in transcription initiation. When the pre-initiation complex (PIC) has been established, TFIIH is required for promoter opening and promoter escape. Phosphorylation of the C-terminal tail (CTD) of the largest subunit of RNA polymerase II by the kinase module CAK controls the initiation of transcription. This Bos taurus (Bovine) protein is General transcription factor IIH subunit 3 (GTF2H3).